A 160-amino-acid chain; its full sequence is 6,7-dimethyl-8-ribityllumazine synthase (160 aa).

5-amino-6-(D-ribitylamino)uracil contacts are provided by residues Trp-27, 59-61 (AIE), and 81-83 (VVI). Residue 86–87 (QT) participates in (2S)-2-hydroxy-3-oxobutyl phosphate binding. His-89 serves as the catalytic Proton donor. Asn-114 is a 5-amino-6-(D-ribitylamino)uracil binding site. Arg-128 provides a ligand contact to (2S)-2-hydroxy-3-oxobutyl phosphate.

Belongs to the DMRL synthase family. As to quaternary structure, homopentamer.

It catalyses the reaction (2S)-2-hydroxy-3-oxobutyl phosphate + 5-amino-6-(D-ribitylamino)uracil = 6,7-dimethyl-8-(1-D-ribityl)lumazine + phosphate + 2 H2O + H(+). It participates in cofactor biosynthesis; riboflavin biosynthesis; riboflavin from 2-hydroxy-3-oxobutyl phosphate and 5-amino-6-(D-ribitylamino)uracil: step 1/2. Its function is as follows. Catalyzes the formation of 6,7-dimethyl-8-ribityllumazine by condensation of 5-amino-6-(D-ribitylamino)uracil with 3,4-dihydroxy-2-butanone 4-phosphate. This is the penultimate step in the biosynthesis of riboflavin. This is 6,7-dimethyl-8-ribityllumazine synthase from Mycolicibacterium paratuberculosis (strain ATCC BAA-968 / K-10) (Mycobacterium paratuberculosis).